A 766-amino-acid polypeptide reads, in one-letter code: DNA ligase (766 aa).

Residues 1 to 30 (MSTVNAKGAKPATDANGQSLNPEEPSEALR) are disordered. Residues 57-61 (DAEYD), 106-107 (SL), and glutamate 141 contribute to the NAD(+) site. Lysine 143 (N6-AMP-lysine intermediate) is an active-site residue. Residues arginine 164, glutamate 201, lysine 317, and lysine 341 each coordinate NAD(+). 4 residues coordinate Zn(2+): cysteine 435, cysteine 438, cysteine 454, and cysteine 460. The BRCT domain maps to 669–758 (STPRTLEGVT…PEAFGDRADA (90 aa)). Residues 747 to 766 (QGPEAFGDRADAADQPAAGE) form a disordered region.

This sequence belongs to the NAD-dependent DNA ligase family. LigA subfamily. Mg(2+) is required as a cofactor. The cofactor is Mn(2+).

The catalysed reaction is NAD(+) + (deoxyribonucleotide)n-3'-hydroxyl + 5'-phospho-(deoxyribonucleotide)m = (deoxyribonucleotide)n+m + AMP + beta-nicotinamide D-nucleotide.. Functionally, DNA ligase that catalyzes the formation of phosphodiester linkages between 5'-phosphoryl and 3'-hydroxyl groups in double-stranded DNA using NAD as a coenzyme and as the energy source for the reaction. It is essential for DNA replication and repair of damaged DNA. The chain is DNA ligase from Kocuria rhizophila (strain ATCC 9341 / DSM 348 / NBRC 103217 / DC2201).